Here is a 360-residue protein sequence, read N- to C-terminus: POU domain, class 5, transcription factor 1 (360 aa).

2 disordered regions span residues 1–51 and 88–114; these read MAGH…GPGV and GGLETSQPEGEAGVGVESNSDGASPEP. The 9aaTAD motif lies at 4–12; sequence HLTSDFAFS. Phosphoserine; by MAPK is present on S111. Residue K123 forms a Glycyl lysine isopeptide (Lys-Gly) (interchain with G-Cter in SUMO) linkage. The POU-specific domain occupies 138 to 212; the sequence is DIKALQKELE…LLQKWVEEAD (75 aa). Residues R157 and Q164 each contribute to the DNA site. DNA-binding regions lie at residues 180–186 and 193–196; these read SQTTICR and SFKN. The homeobox DNA-binding region spans 230 to 289; the sequence is RKRKRTSIENRVRGNLENLFLQCPKPTLQQISHIAQQLGLEKDVVRVWFCNRRQKGKRSS. T235 is modified (phosphothreonine). Residues S236, S289, S290, and S355 each carry the phosphoserine modification.

It belongs to the POU transcription factor family. Class-5 subfamily. In terms of assembly, interacts with PKM. Interacts with WWP2. Interacts with UBE2I and ZSCAN10. Interacts with PCGF1. Interacts with ESRRB; recruits ESRRB near the POU5F1-SOX2 element in the NANOG proximal promoter; the interaction is DNA independent. Interacts with ZNF322. Interacts with MAPK8 and MAPK9; the interaction allows MAPK8 and MAPK9 to phosphorylate POU5F1 on Ser-355. Interacts (when phosphorylated on Ser-355) with FBXW8. Interacts with FBXW4. Interacts with SOX2 and SOX15; binds synergistically with either SOX2 or SOX15 to DNA. Interacts with DDX56. In terms of processing, sumoylation enhances the protein stability, DNA binding and transactivation activity. Sumoylation is required for enhanced YES1 expression. Ubiquitinated; undergoes 'Lys-63'-linked polyubiquitination by WWP2 leading to proteasomal degradation. Post-translationally, ERK1/2-mediated phosphorylation at Ser-111 promotes nuclear exclusion and proteasomal degradation. Phosphorylation at Thr-235 and Ser-236 decrease DNA-binding and alters ability to activate transcription.

The protein localises to the cytoplasm. It localises to the nucleus. Its function is as follows. Transcription factor that binds to the octamer motif (5'-ATTTGCAT-3'). Forms a trimeric complex with SOX2 or SOX15 on DNA and controls the expression of a number of genes involved in embryonic development such as YES1, FGF4, UTF1 and ZFP206. Critical for early embryogenesis and for embryonic stem cell pluripotency. This chain is POU domain, class 5, transcription factor 1 (POU5F1), found in Pan troglodytes (Chimpanzee).